The following is a 970-amino-acid chain: Serine/threonine-protein kinase PLK4 (970 aa).

The Protein kinase domain maps to 12-265 (FKVGNLLGKG…LSSVLDHPFM (254 aa)). ATP contacts are provided by residues 18–26 (LGKGSFAGV) and Lys41. Lys45 and Lys46 each carry N6-acetyllysine. Catalysis depends on Asp136, which acts as the Proton acceptor. 2 disordered regions span residues 323–458 (TVFP…NHLC) and 497–538 (SISP…HSVK). Over residues 328–356 (NKSSTDFSSSGDGNSFYTQWGNQETSNSG) the composition is skewed to polar residues. The span at 360–369 (VIQDAEERPH) shows a compositional bias: basic and acidic residues. Residues 379-393 (SDRSGTSNSQSQAKT) show a composition bias toward polar residues. Position 401 is a phosphoserine (Ser401). The span at 438–454 (SSSSGSFERPDNNQALS) shows a compositional bias: polar residues. Positions 504–515 (FQGHPDLQKDTS) are enriched in basic and acidic residues. Residues 586–699 (TLRSITSPLV…SRFVQLVRSK (114 aa)) form the Cryptic POLO box 1 (CPB1) domain. Ser665 is modified (phosphoserine). The region spanning 700 to 813 (SPKITYFTRY…GRKPGSTSSP (114 aa)) is the Cryptic POLO box 2 (CPB2) domain. Positions 808-828 (GSTSSPKALSPPPSVDSNYPT) are disordered. At Ser817 the chain carries Phosphoserine. Residues 886–964 (QLLKSVFVKN…LSSILLMFSN (79 aa)) form the POLO box domain.

The protein belongs to the protein kinase superfamily. Ser/Thr protein kinase family. CDC5/Polo subfamily. In terms of assembly, homodimer. Interacts with CEP152 (via N-terminus). Interacts with CEP78; this interaction may be important for proper PLK4 localization to the centriole and PLK4-induced overduplication of centrioles. Interacts with CEP131. Interacts simultaneously with TENT5C and CEP192. Interacts with TENT5C; this interaction leads to the TENT5C recruitment in the centrosome. Interacts with CEP85; this interaction may be important in cell migration and centriole assembly. In terms of processing, acetylation by KAT2A and KAT2B impairs kinase activity by shifting the kinase to an inactive conformation. Ubiquitinated; leading to its degradation by the proteasome. Deubiquitinated by USP54; leading to PLK4 stabilization. Post-translationally, tyrosine-phosphorylated by TEC.

Its subcellular location is the cytoplasm. The protein resides in the cytoskeleton. The protein localises to the microtubule organizing center. It localises to the centrosome. It is found in the centriole. Its subcellular location is the nucleus. The protein resides in the nucleolus. The protein localises to the cleavage furrow. It catalyses the reaction L-seryl-[protein] + ATP = O-phospho-L-seryl-[protein] + ADP + H(+). The enzyme catalyses L-threonyl-[protein] + ATP = O-phospho-L-threonyl-[protein] + ADP + H(+). Its function is as follows. Serine/threonine-protein kinase that plays a central role in centriole duplication. Able to trigger procentriole formation on the surface of the parental centriole cylinder, leading to the recruitment of centriole biogenesis proteins such as SASS6, CPAP, CCP110, CEP135 and gamma-tubulin. When overexpressed, it is able to induce centrosome amplification through the simultaneous generation of multiple procentrioles adjoining each parental centriole during S phase. Phosphorylates 'Ser-151' of FBXW5 during the G1/S transition, leading to inhibit FBXW5 ability to ubiquitinate SASS6. Its central role in centriole replication suggests a possible role in tumorigenesis, centrosome aberrations being frequently observed in tumors. Also involved in deuterosome-mediated centriole amplification in multiciliated that can generate more than 100 centrioles. Also involved in trophoblast differentiation by phosphorylating HAND1, leading to disrupt the interaction between HAND1 and MDFIC and activate HAND1. Phosphorylates CDC25C and CHEK2. Required for the recruitment of STIL to the centriole and for STIL-mediated centriole amplification. Phosphorylates CEP131 at 'Ser-78' and PCM1 at 'Ser-372' which is essential for proper organization and integrity of centriolar satellites. This chain is Serine/threonine-protein kinase PLK4, found in Homo sapiens (Human).